A 235-amino-acid polypeptide reads, in one-letter code: Mediator of RNA polymerase II transcription subunit 6 (235 aa).

Belongs to the Mediator complex subunit 6 family. Component of the Mediator complex.

It localises to the nucleus. Its function is as follows. Component of the Mediator complex, a coactivator involved in the regulated transcription of nearly all RNA polymerase II-dependent genes. Mediator functions as a bridge to convey information from gene-specific regulatory proteins to the basal RNA polymerase II transcription machinery. Mediator is recruited to promoters by direct interactions with regulatory proteins and serves as a scaffold for the assembly of a functional preinitiation complex with RNA polymerase II and the general transcription factors. The protein is Mediator of RNA polymerase II transcription subunit 6 (MED6) of Eremothecium gossypii (strain ATCC 10895 / CBS 109.51 / FGSC 9923 / NRRL Y-1056) (Yeast).